A 164-amino-acid polypeptide reads, in one-letter code: Putative anionic 4-hydroxy-benzoate permease (164 aa).

The tract at residues 1–30 (CGRRRGSLAWPDASSPSANPRPGAGAAESS) is disordered. 3 helical membrane passes run 62–82 (LWVACFGFGTGACIILALMFM), 97–117 (GMAQCVGYLLAAFGPPLVGGL), and 126–146 (PALTVCLVLSLTMAAAGMLAG).

It belongs to the major facilitator superfamily. Cyanate porter (TC 2.A.1.17) family.

It localises to the cell membrane. Its function is as follows. May be involved in uptake of anionic 4-hydroxy-benzoate. The sequence is that of Putative anionic 4-hydroxy-benzoate permease from Thauera aromatica.